A 475-amino-acid chain; its full sequence is Serralysin G (475 aa).

The propeptide occupies M1–S14. Residue H186 coordinates Zn(2+). The active site involves E187. Residues H190 and Y226 each contribute to the Zn(2+) site. The Ca(2+) site is built by R261, G263, T265, D293, G295, G296, D298, E337, G342, G344, D346, N351, N355, G359, G360, A361, G362, D364, G368, G370, G371, D373, G377, G378, A379, G380, D382, D391, D398, and D408. Hemolysin-type calcium-binding repeat units follow at residues I340–I357 and D358–L375.

This sequence belongs to the peptidase M10B family. Ca(2+) serves as cofactor. Requires Zn(2+) as cofactor.

It localises to the secreted. The enzyme catalyses Preferential cleavage of bonds with hydrophobic residues in P1'.. In Dickeya chrysanthemi (Pectobacterium chrysanthemi), this protein is Serralysin G (prtG).